The chain runs to 219 residues: Cytidylate kinase (219 aa).

15–23 contributes to the ATP binding site; sequence GPAASGKGT.

The protein belongs to the cytidylate kinase family. Type 1 subfamily.

The protein resides in the cytoplasm. It carries out the reaction CMP + ATP = CDP + ADP. It catalyses the reaction dCMP + ATP = dCDP + ADP. The polypeptide is Cytidylate kinase (Brucella melitensis biotype 1 (strain ATCC 23456 / CCUG 17765 / NCTC 10094 / 16M)).